A 225-amino-acid chain; its full sequence is Type II restriction enzyme BslI subunit alpha (225 aa).

C4-type zinc fingers lie at residues C36–C53 and C63–C84.

Heterotetramer of two alpha and two beta subunits. The alpha subunit is believed to be responsible for DNA recognition, while the beta subunit is thought to mediate cleavage. The cofactor is Zn(2+).

The catalysed reaction is Endonucleolytic cleavage of DNA to give specific double-stranded fragments with terminal 5'-phosphates.. A P subtype restriction enzyme that recognizes the double-stranded sequence 5'-CCN(7)GG-3' and cleaves after N-7. The polypeptide is Type II restriction enzyme BslI subunit alpha (Bacillus sp. (strain NEB-606)).